A 234-amino-acid chain; its full sequence is Sugar fermentation stimulation protein homolog (234 aa).

Belongs to the SfsA family.

This chain is Sugar fermentation stimulation protein homolog, found in Pectobacterium carotovorum subsp. carotovorum (strain PC1).